Consider the following 239-residue polypeptide: Tetraspanin-9 (239 aa).

At 1–13 the chain is on the cytoplasmic side; sequence MARGCLCCLKYTM. A helical membrane pass occupies residues 14 to 34; that stretch reads FLFNLIFWLCGCGLLGVGIWL. The Extracellular segment spans residues 35–55; sequence SVSQGNFATFSPSFPSLSAAN. Residues 56-76 traverse the membrane as a helical segment; the sequence is LVIAIGTIVMVTGFLGCLGAI. Over 77-85 the chain is Cytoplasmic; that stretch reads KENKCLLLS. The chain crosses the membrane as a helical span at residues 86 to 106; it reads FFIVLLIILLAELILIILFFV. Topologically, residues 107–203 are extracellular; sequence YMDKVNENAK…VKLWFDDNKH (97 aa). An N-linked (GlcNAc...) asparagine glycan is attached at Asn180. The chain crosses the membrane as a helical span at residues 204-224; sequence VLGTVGMCILIMQILGMAFSM. Over 225–239 the chain is Cytoplasmic; the sequence is TLFQHIHRTGKKYDA.

This sequence belongs to the tetraspanin (TM4SF) family. In terms of assembly, found in a complex with GP6. Glycosylated. Strongly expressed in megakaryocytes, platelets and lung. Weakly expressed in bone marrow, brain and kidney (at protein level).

It is found in the membrane. The polypeptide is Tetraspanin-9 (Tspan9) (Mus musculus (Mouse)).